The primary structure comprises 271 residues: Probable endonuclease lcl3 (271 aa).

A disordered region spans residues 1–27 (MRWPWSGDDHEQNKSSRLWATSPKSSD). Polar residues predominate over residues 15 to 27 (SSRLWATSPKSSD). The chain crosses the membrane as a helical span at residues 38–55 (LIATLALTVSTVAGVRLY). The region spanning 76-236 (KSLFGQVTSV…RDSKVGMWAK (161 aa)) is the TNase-like domain. The active site involves arginine 127. Position 132 (aspartate 132) interacts with Ca(2+). Catalysis depends on residues glutamate 135 and arginine 175. Positions 226 to 271 (ARDSKVGMWAKPTLRQRLGGAPTQPPESPREYKNRHNAAEKLKKPG) are disordered. The span at 253 to 271 (SPREYKNRHNAAEKLKKPG) shows a compositional bias: basic and acidic residues.

It belongs to the LCL3 family.

The protein resides in the mitochondrion. Its subcellular location is the membrane. The sequence is that of Probable endonuclease lcl3 (lcl3) from Pyrenophora tritici-repentis (strain Pt-1C-BFP) (Wheat tan spot fungus).